We begin with the raw amino-acid sequence, 163 residues long: Deoxyuridine 5'-triphosphate nucleotidohydrolase (163 aa).

Residues 78–80 (RSG), asparagine 91, and 95–97 (TVD) each bind substrate. Over residues 140-151 (ERESLNETERGD) the composition is skewed to basic and acidic residues. A disordered region spans residues 140 to 163 (ERESLNETERGDGGFGHTGVNSQP).

This sequence belongs to the dUTPase family. Mg(2+) is required as a cofactor.

It catalyses the reaction dUTP + H2O = dUMP + diphosphate + H(+). It participates in pyrimidine metabolism; dUMP biosynthesis; dUMP from dCTP (dUTP route): step 2/2. Its function is as follows. This enzyme is involved in nucleotide metabolism: it produces dUMP, the immediate precursor of thymidine nucleotides and it decreases the intracellular concentration of dUTP so that uracil cannot be incorporated into DNA. This is Deoxyuridine 5'-triphosphate nucleotidohydrolase from Heliobacterium modesticaldum (strain ATCC 51547 / Ice1).